The sequence spans 476 residues: Growth/differentiation factor 10 (476 aa).

The N-terminal stretch at 1-29 (MAPGLARISLRSQLLPLVPLLLLLRGAGC) is a signal peptide. Positions 30-366 (GHRVPSWSSL…EKTMQKARRR (337 aa)) are excised as a propeptide. N-linked (GlcNAc...) asparagine glycans are attached at residues Asn114, Asn152, and Asn277. 2 disordered regions span residues 268-305 (GDFE…LDER) and 330-358 (PRTG…FDEK). 3 cysteine pairs are disulfide-bonded: Cys374/Cys441, Cys403/Cys473, and Cys407/Cys475. Asn467 carries N-linked (GlcNAc...) asparagine glycosylation.

This sequence belongs to the TGF-beta family. Homodimer or heterodimer. Can form a non-covalent complex of the mature region and the pro-region. As to expression, costa, costicartilage, femur, calvaria, trachea, aorta and brain. Predominantly in the cerebellum.

The protein localises to the secreted. Growth factor involved in osteogenesis and adipogenesis. Plays an inhibitory role in the process of osteoblast differentiation via SMAD2/3 pathway. Plays an inhibitory role in the process of adipogenesis. In Rattus norvegicus (Rat), this protein is Growth/differentiation factor 10.